Here is a 210-residue protein sequence, read N- to C-terminus: Small ribosomal subunit protein uS5 (210 aa).

The span at 1 to 23 (MARTPSSDRPERGRGGERGDRPN) shows a compositional bias: basic and acidic residues. Residues 1–40 (MARTPSSDRPERGRGGERGDRPNRGRGGAEQTPREREESE) form a disordered region. The region spanning 41-104 (FVDKLVHINR…EQAKRNMIKI (64 aa)) is the S5 DRBM domain.

This sequence belongs to the universal ribosomal protein uS5 family. Part of the 30S ribosomal subunit. Contacts proteins S4 and S8.

Functionally, with S4 and S12 plays an important role in translational accuracy. Its function is as follows. Located at the back of the 30S subunit body where it stabilizes the conformation of the head with respect to the body. The sequence is that of Small ribosomal subunit protein uS5 from Paramagnetospirillum magneticum (strain ATCC 700264 / AMB-1) (Magnetospirillum magneticum).